The chain runs to 462 residues: tRNA modification GTPase MnmE (462 aa).

Arg27, Glu89, and Arg128 together coordinate (6S)-5-formyl-5,6,7,8-tetrahydrofolate. Residues 224–383 (GLATAIVGRP…LEAQIAKLFF (160 aa)) enclose the TrmE-type G domain. K(+) is bound at residue Asn234. GTP is bound by residues 234–239 (NVGKSS), 253–259 (TDVAGTT), and 278–281 (DTAG). Ser238 lines the Mg(2+) pocket. Residues Thr253, Val255, and Thr258 each contribute to the K(+) site. Thr259 is a binding site for Mg(2+). Position 462 (Lys462) interacts with (6S)-5-formyl-5,6,7,8-tetrahydrofolate.

This sequence belongs to the TRAFAC class TrmE-Era-EngA-EngB-Septin-like GTPase superfamily. TrmE GTPase family. As to quaternary structure, homodimer. Heterotetramer of two MnmE and two MnmG subunits. K(+) serves as cofactor.

The protein localises to the cytoplasm. Its function is as follows. Exhibits a very high intrinsic GTPase hydrolysis rate. Involved in the addition of a carboxymethylaminomethyl (cmnm) group at the wobble position (U34) of certain tRNAs, forming tRNA-cmnm(5)s(2)U34. This is tRNA modification GTPase MnmE from Latilactobacillus sakei subsp. sakei (strain 23K) (Lactobacillus sakei subsp. sakei).